The primary structure comprises 208 residues: MADSNALDGLTQALRKLPGVGAKSAARMAFHLLQHDKPGALQIARALEHAVQSIRHCALCNTLTEQEVCVTCANPQRDRSKLCVVETPADQAALERTLAYRGLYFVLMGKLSPLDGVGPNDIGLQKLFDRAVPKDEHGQPLPAASREVQEVILATNFTAEGEATAHVIAQALKSRGMQVTRLARGVPVGSELEYVDLGTIAHALTDRR.

The C4-type zinc-finger motif lies at 57–72 (CALCNTLTEQEVCVTC). The Toprim domain maps to 80–187 (SKLCVVETPA…QVTRLARGVP (108 aa)).

Belongs to the RecR family.

Functionally, may play a role in DNA repair. It seems to be involved in an RecBC-independent recombinational process of DNA repair. It may act with RecF and RecO. The protein is Recombination protein RecR of Polaromonas naphthalenivorans (strain CJ2).